Consider the following 169-residue polypeptide: Shikimate kinase (169 aa).

ATP is bound at residue 12–17; the sequence is AVGKTT. Thr-16 contacts Mg(2+). Positions 34, 58, and 80 each coordinate substrate. Position 119 (Arg-119) interacts with ATP. Arg-139 provides a ligand contact to substrate. Arg-156 serves as a coordination point for ATP.

Belongs to the shikimate kinase family. In terms of assembly, monomer. Requires Mg(2+) as cofactor.

It localises to the cytoplasm. The catalysed reaction is shikimate + ATP = 3-phosphoshikimate + ADP + H(+). The protein operates within metabolic intermediate biosynthesis; chorismate biosynthesis; chorismate from D-erythrose 4-phosphate and phosphoenolpyruvate: step 5/7. Its function is as follows. Catalyzes the specific phosphorylation of the 3-hydroxyl group of shikimic acid using ATP as a cosubstrate. The chain is Shikimate kinase from Alkaliphilus oremlandii (strain OhILAs) (Clostridium oremlandii (strain OhILAs)).